A 165-amino-acid polypeptide reads, in one-letter code: Natriuretic peptide Na-NP (165 aa).

The N-terminal stretch at 1–25 is a signal peptide; it reads MVGLSRLAGGGLLLVLALLPLALDG. Residues 26–83 constitute a propeptide that is removed on maturation; the sequence is KPAPEALHKPPTGLRTSLAALRILGYLRPDSKQSRAARDRMLHPEQQVGGGGDSRPLQ. A compositionally biased stretch (basic and acidic residues) spans 56–68; it reads SKQSRAARDRMLH. 2 disordered regions span residues 56 to 100 and 135 to 165; these read SKQS…QKID and PDSK…SRVI. A disulfide bond links C94 and C110. The propeptide occupies 129 to 165; the sequence is ILEYLRPDSKRSRATRDRMLHPEQQVGGGGGGGSRVI. Basic and acidic residues predominate over residues 135-149; it reads PDSKRSRATRDRMLH. Gly residues predominate over residues 154-165; sequence VGGGGGGGSRVI.

Belongs to the natriuretic peptide family. In terms of tissue distribution, expressed by the venom gland.

The protein localises to the secreted. Functionally, natriuretic peptide that dose-dependently induces the rapid relaxation of rat aortic strips phenylephrine-precontracted. Acts by stimulating cGMP production in a dose-dependent manner (by probably activating NPR1 and/or NPR2). May also show potent hypotensive effects. The sequence is that of Natriuretic peptide Na-NP from Naja atra (Chinese cobra).